A 331-amino-acid polypeptide reads, in one-letter code: DSC E3 ubiquitin ligase complex subunit D (331 aa).

N-linked (GlcNAc...) asparagine glycosylation occurs at asparagine 26. 3 helical membrane-spanning segments follow: residues 63–83, 107–127, and 159–179; these read ILIYCELSALYYMDCSVILFA, PFIGAIFVSNIFCMIFHNFFT, and LFLLDFLVLILDLVMLGLIVE. Over residues 197–214 the composition is skewed to basic and acidic residues; sequence VQDHDSEERGVHRTRPES. The segment at 197-225 is disordered; sequence VQDHDSEERGVHRTRPESRSSVVGAELDE.

Component of the DSC E3 ubiquitin ligase complex composed of dscA, dscB, dscC and dscD.

It localises to the endoplasmic reticulum membrane. It functions in the pathway protein modification; protein ubiquitination. Functionally, component of the DSC E3 ubiquitin ligase complex which is required for the srbA transcriptional activator proteolytic cleavage to release the soluble transcription factor from the membrane in low oxygen or sterol conditions. Required for growth during hypoxia and triazole drug susceptibility, as well as for virulence in a murine model of invasive pulmonary aspergillosis (IPA). The sequence is that of DSC E3 ubiquitin ligase complex subunit D from Aspergillus fumigatus (strain CBS 144.89 / FGSC A1163 / CEA10) (Neosartorya fumigata).